A 186-amino-acid chain; its full sequence is Early nodulin-like protein 13 (186 aa).

An N-terminal signal peptide occupies residues 1–23 (MAQRTLVATFFLIFFLLTNLVCS). Positions 24 to 128 (KEIIVGGKTS…GEKLHIVVMS (105 aa)) constitute a Phytocyanin domain. A disulfide bridge links C82 with C116. N83 and N90 each carry an N-linked (GlcNAc...) asparagine glycan. A165 carries GPI-anchor amidated alanine lipidation. Residues 166–186 (SSLTRQVGVLGFVGLLAIVLL) constitute a propeptide, removed in mature form.

It belongs to the early nodulin-like (ENODL) family. Mostly expressed in seedlings, siliques and flowers, and, to a lower extent, in roots, stems and seeds, but barely in leaves.

It is found in the cell membrane. Functionally, may act as a carbohydrate transporter. Required, together with ENODL11, ENODL12, ENODL13, ENODL14 and ENODL15, for male-female communication and pollen tube reception and burst at the synergid cell surface of the female gametophyte. This Arabidopsis thaliana (Mouse-ear cress) protein is Early nodulin-like protein 13.